We begin with the raw amino-acid sequence, 263 residues long: Small ribosomal subunit protein uS3 (263 aa).

A KH type-2 domain is found at 39–107 (VREYLKKKLK…PVHVNIEEIR (69 aa)). The interval 211–263 (GELPPEAATPREEERRPRRAPRGDRPDGARTGRPGGRGRGPRKADAAPAPEGE) is disordered. Residues 219–240 (TPREEERRPRRAPRGDRPDGAR) are compositionally biased toward basic and acidic residues.

This sequence belongs to the universal ribosomal protein uS3 family. Part of the 30S ribosomal subunit. Forms a tight complex with proteins S10 and S14.

Its function is as follows. Binds the lower part of the 30S subunit head. Binds mRNA in the 70S ribosome, positioning it for translation. This Bordetella pertussis (strain Tohama I / ATCC BAA-589 / NCTC 13251) protein is Small ribosomal subunit protein uS3.